Here is a 269-residue protein sequence, read N- to C-terminus: MASEIKKKLFWRAVVAEFLAMTLFVFISIGSALGFNYPLERNQTLVQDNVKVSLAFGLSIATLAQSVGHISGAHLNPAVTLGLLLSCQISILRAVMYIIAQCVGAIVASAILSGITSSLLENSLGRNDLARGVNSGQGLGIEIIGTLQLVLCVLATTDRRRRDLGGSAPLAIGLSVALGHLLAIDYTGCGINPARSFGSAVLTRNFSNHWIFWVGPFIGSALAVLIYDFILAPRSSDFTDRMKVWTSGQVEEYDLDADDINSRVEMKPK.

Residues 1–11 lie on the Cytoplasmic side of the membrane; it reads MASEIKKKLFW. The helical transmembrane segment at 12-29 threads the bilayer; it reads RAVVAEFLAMTLFVFISI. The Extracellular segment spans residues 30 to 46; that stretch reads GSALGFNYPLERNQTLV. Residue asparagine 42 is glycosylated (N-linked (GlcNAc...) asparagine). The helical transmembrane segment at 47-65 threads the bilayer; sequence QDNVKVSLAFGLSIATLAQ. Residues 66-68 lie on the Cytoplasmic side of the membrane; the sequence is SVG. An intramembrane segment occupies 69–82; the sequence is HISGAHLNPAVTLG. Residues 76-78 carry the NPA 1 motif; the sequence is NPA. Topologically, residues 83–90 are cytoplasmic; sequence LLLSCQIS. Residues 91-109 form a helical membrane-spanning segment; sequence ILRAVMYIIAQCVGAIVAS. The Extracellular segment spans residues 110-133; that stretch reads AILSGITSSLLENSLGRNDLARGV. Residues 134-153 form a helical membrane-spanning segment; it reads NSGQGLGIEIIGTLQLVLCV. Residues 154-163 are Cytoplasmic-facing; the sequence is LATTDRRRRD. The chain crosses the membrane as a helical span at residues 164 to 181; it reads LGGSAPLAIGLSVALGHL. Topologically, residues 182–186 are extracellular; that stretch reads LAIDY. Residues 187–199 lie within the membrane without spanning it; sequence TGCGINPARSFGS. The NPA 2 motif lies at 192 to 194; the sequence is NPA. Over 200-206 the chain is Extracellular; the sequence is AVLTRNF. Residue asparagine 205 is glycosylated (N-linked (GlcNAc...) asparagine). A helical transmembrane segment spans residues 207 to 224; the sequence is SNHWIFWVGPFIGSALAV. Residues 225 to 269 are Cytoplasmic-facing; that stretch reads LIYDFILAPRSSDFTDRMKVWTSGQVEEYDLDADDINSRVEMKPK. Serine 247 is subject to Phosphoserine. Position 253 is a phosphotyrosine (tyrosine 253). Phosphoserine is present on serine 262.

The protein belongs to the MIP/aquaporin (TC 1.A.8) family. As to quaternary structure, homotetramer; each monomer provides an independent water pore. Component of the ankyrin-1 complex in the erythrocyte, composed of ANK1, RHCE, RHAG, SLC4A1, EPB42, GYPA, GYPB and AQP1. Interacts with EPHB2; involved in endolymph production in the inner ear. Identified in a complex with STOM. Interacts (via the N-terminal) with ANK1 (via ANK 1-5 repeats). Interacts (via the C-terminal) with EPB42. As to expression, erythrocytes and renal tubules.

It is found in the cell membrane. It carries out the reaction H2O(in) = H2O(out). The catalysed reaction is nitric oxide(out) = nitric oxide(in). The enzyme catalyses CO2(out) = CO2(in). It catalyses the reaction glycerol(in) = glycerol(out). It carries out the reaction H2O2(out) = H2O2(in). The catalysed reaction is K(+)(in) = K(+)(out). The enzyme catalyses Na(+)(in) = Na(+)(out). Functionally, forms a water channel that facilitates the transport of water across cell membranes, playing a crucial role in water homeostasis in various tissues. Could also be permeable to small solutes including hydrogen peroxide, glycerol and gases such as amonnia (NH3), nitric oxide (NO) and carbon dioxide (CO2). Recruited to the ankyrin-1 complex, a multiprotein complex of the erythrocyte membrane, it could be part of a CO2 metabolon, linking facilitated diffusion of CO2 across the membrane, anion exchange of Cl(-)/HCO3(-) and interconversion of dissolved CO2 and carbonic acid in the cytosol. In vitro, it shows non-selective gated cation channel activity and may be permeable to cations like K(+) and Na(+) in vivo. This Rattus norvegicus (Rat) protein is Aquaporin-1.